A 104-amino-acid polypeptide reads, in one-letter code: ATP synthase subunit c (104 aa).

The next 2 helical transmembrane spans lie at 31-51 and 75-95; these read SVVA…IGMG and MFIA…VAMI.

This sequence belongs to the ATPase C chain family. As to quaternary structure, F-type ATPases have 2 components, F(1) - the catalytic core - and F(0) - the membrane proton channel. F(1) has five subunits: alpha(3), beta(3), gamma(1), delta(1), epsilon(1). F(0) has three main subunits: a(1), b(2) and c(10-14). The alpha and beta chains form an alternating ring which encloses part of the gamma chain. F(1) is attached to F(0) by a central stalk formed by the gamma and epsilon chains, while a peripheral stalk is formed by the delta and b chains.

It localises to the cell inner membrane. Functionally, f(1)F(0) ATP synthase produces ATP from ADP in the presence of a proton or sodium gradient. F-type ATPases consist of two structural domains, F(1) containing the extramembraneous catalytic core and F(0) containing the membrane proton channel, linked together by a central stalk and a peripheral stalk. During catalysis, ATP synthesis in the catalytic domain of F(1) is coupled via a rotary mechanism of the central stalk subunits to proton translocation. In terms of biological role, key component of the F(0) channel; it plays a direct role in translocation across the membrane. A homomeric c-ring of between 10-14 subunits forms the central stalk rotor element with the F(1) delta and epsilon subunits. This chain is ATP synthase subunit c, found in Aliarcobacter butzleri (strain RM4018) (Arcobacter butzleri).